The chain runs to 346 residues: Phosphoribosylformylglycinamidine cyclo-ligase (346 aa).

Belongs to the AIR synthase family.

The protein localises to the cytoplasm. The catalysed reaction is 2-formamido-N(1)-(5-O-phospho-beta-D-ribosyl)acetamidine + ATP = 5-amino-1-(5-phospho-beta-D-ribosyl)imidazole + ADP + phosphate + H(+). Its pathway is purine metabolism; IMP biosynthesis via de novo pathway; 5-amino-1-(5-phospho-D-ribosyl)imidazole from N(2)-formyl-N(1)-(5-phospho-D-ribosyl)glycinamide: step 2/2. The sequence is that of Phosphoribosylformylglycinamidine cyclo-ligase from Shewanella halifaxensis (strain HAW-EB4).